Reading from the N-terminus, the 365-residue chain is MAGKKIAGVLGATGSVGQRFILLLANHPHFELKVLGASSRSAGKKYVDAVNWKQTDLLPESATDIIVSECKSEFFKECDIVFSGLDADYAGAIEKEFMEAGIAIVSNAKNYRREQDVPLIVPVVNPEHLDIVAQKLDTAKAQGKPRPGFIICISNCSTAGLVAPLKPLIEKFGPIDALTTTTLQAISGAGFSPGVPGIDILDNIIPYIGGEEDKMEWETKKILAPLAEDKTHVKLLTPEEIKVSAQCNRVAVSDGHTECISLRFKNRPAPSVEQVKTCLKEYVCDAYKLGCHSAPKQTIHVLEQPDRPQPRLDRNRDSGYGVSVGRIREDPLLDFKMVVLSHNTIIGAAGSGVLIAEILLARNLI.

NADP(+)-binding residues include Thr13, Gly14, Ser15, Val16, Ser38, Ser41, Leu85, and Asp86. Thr13 carries the phosphothreonine modification. The active-site Acyl-thioester intermediate is the Cys156. An NADP(+)-binding site is contributed by Gly188. His256 serves as the catalytic Proton acceptor. A phosphoserine mark is found at Ser318 and Ser323. Asn343 provides a ligand contact to NADP(+).

This sequence belongs to the aspartate-semialdehyde dehydrogenase family. Homotetramer.

Its subcellular location is the cytoplasm. The protein resides in the cytosol. It localises to the nucleus. It carries out the reaction L-aspartate 4-semialdehyde + phosphate + NADP(+) = 4-phospho-L-aspartate + NADPH + H(+). It functions in the pathway amino-acid biosynthesis; L-methionine biosynthesis via de novo pathway; L-homoserine from L-aspartate: step 2/3. The protein operates within amino-acid biosynthesis; L-threonine biosynthesis; L-threonine from L-aspartate: step 2/5. Functionally, catalyzes the NADPH-dependent formation of L-aspartate 4-semialdehyde (L-ASA) by the reductive dephosphorylation of 4-phospho-L-aspartate. Mediates the second step in the biosynthesis of amino acids that derive from aspartate (the aspartate family of amino acids), including methioinine and threonine, the latter of which is a precursor to isoleucine. This chain is Aspartate-semialdehyde dehydrogenase (HOM2), found in Saccharomyces cerevisiae (strain ATCC 204508 / S288c) (Baker's yeast).